The following is a 290-amino-acid chain: Acetyl-coenzyme A carboxylase carboxyl transferase subunit beta (290 aa).

The CoA carboxyltransferase N-terminal domain maps to 27–290 (LWVKCPSCEA…LQRQPADALA (264 aa)). Zn(2+)-binding residues include Cys-31, Cys-34, Cys-50, and Cys-53. The C4-type zinc-finger motif lies at 31–53 (CPSCEAVLYRNDVDANLHVCPKC).

It belongs to the AccD/PCCB family. Acetyl-CoA carboxylase is a heterohexamer composed of biotin carboxyl carrier protein (AccB), biotin carboxylase (AccC) and two subunits each of ACCase subunit alpha (AccA) and ACCase subunit beta (AccD). It depends on Zn(2+) as a cofactor.

It localises to the cytoplasm. It catalyses the reaction N(6)-carboxybiotinyl-L-lysyl-[protein] + acetyl-CoA = N(6)-biotinyl-L-lysyl-[protein] + malonyl-CoA. The protein operates within lipid metabolism; malonyl-CoA biosynthesis; malonyl-CoA from acetyl-CoA: step 1/1. Its function is as follows. Component of the acetyl coenzyme A carboxylase (ACC) complex. Biotin carboxylase (BC) catalyzes the carboxylation of biotin on its carrier protein (BCCP) and then the CO(2) group is transferred by the transcarboxylase to acetyl-CoA to form malonyl-CoA. In Burkholderia multivorans (strain ATCC 17616 / 249), this protein is Acetyl-coenzyme A carboxylase carboxyl transferase subunit beta.